Here is a 326-residue protein sequence, read N- to C-terminus: Toluene-4-monooxygenase system, ferredoxin--NAD(+) reductase component (326 aa).

The 92-residue stretch at 1–92 folds into the 2Fe-2S ferredoxin-type domain; it reads MFNIQSDDLL…DLKIKVINRA (92 aa). Residues Cys36, Cys41, Cys44, and Cys76 each contribute to the [2Fe-2S] cluster site. A ferredoxin-reductase region spans residues 95-326; that stretch reads RASHPPKRFS…FEAIHFDRFF (232 aa). The FAD-binding FR-type domain occupies 100 to 195; sequence PKRFSTRVVS…DGPYGLSVLK (96 aa). Residues 146–149, 162–164, and 170–172 contribute to the FAD site; these read RAYS, IVK, and KVS.

The protein belongs to the bacterial ring-hydroxylating dioxygenase ferredoxin reductase family. In terms of assembly, monomer. The alkene monooxygenase multicomponent enzyme system is composed of an electron transfer component and a monooxygenase component interacting with the effector protein TmoD. The electron transfer component is composed of a ferredoxin reductase (TmoF) and a ferredoxin (TmoC), and the monooxygenase component is formed by a heterohexamer (dimer of heterotrimers) of two alpha subunits (TmoA), two beta subunits (TmoE) and two gamma subunits (TmoB). The cofactor is FAD. Requires [2Fe-2S] cluster as cofactor.

The enzyme catalyses 2 reduced [2Fe-2S]-[ferredoxin] + NAD(+) + H(+) = 2 oxidized [2Fe-2S]-[ferredoxin] + NADH. Its pathway is xenobiotic degradation; toluene degradation. Reductase component of the toluene-4-monooxygenase multicomponent enzyme system which catalyzes the O2- and NADH-dependent hydroxylation of toluene to form p-cresol. Ferredoxin reductase catalyzes the transfer of electrons from NADH to ferredoxin (TmoC). The sequence is that of Toluene-4-monooxygenase system, ferredoxin--NAD(+) reductase component from Ectopseudomonas mendocina (Pseudomonas mendocina).